Reading from the N-terminus, the 383-residue chain is Cytochrome b (383 aa).

The next 4 helical transmembrane spans lie at 35–55, 79–100, 115–135, and 180–200; these read FGSILGIFLMIQIISGFILSM, WLFRLIHMNGASFYFLMMYIHI, WGIGIMILLMSMAAAFMGYVL, and FFSLHFILPLLILFMVILHLF. 2 residues coordinate heme b: histidine 85 and histidine 99. Heme b-binding residues include histidine 184 and histidine 198. Position 203 (histidine 203) interacts with a ubiquinone. The next 4 helical transmembrane spans lie at 228–248, 290–310, 321–341, and 348–368; these read IKDLLGFYIILFIFMFINFQF, LGGVIGLVMSILILYIMIFYN, LNKIYYWMFINNFILLTWLGK, and FTNINMLFTTTYFLYFFLNFY.

Belongs to the cytochrome b family. As to quaternary structure, the main subunits of complex b-c1 are: cytochrome b, cytochrome c1 and the Rieske protein. Requires heme b as cofactor.

The protein resides in the mitochondrion inner membrane. In terms of biological role, component of the ubiquinol-cytochrome c reductase complex (complex III or cytochrome b-c1 complex) that is part of the mitochondrial respiratory chain. The b-c1 complex mediates electron transfer from ubiquinol to cytochrome c. Contributes to the generation of a proton gradient across the mitochondrial membrane that is then used for ATP synthesis. The polypeptide is Cytochrome b (MT-CYB) (Apis mellifera ligustica (Common honeybee)).